Reading from the N-terminus, the 368-residue chain is Methionine import ATP-binding protein MetN (368 aa).

Residues Ile-5–Ile-260 enclose the ABC transporter domain. An ATP-binding site is contributed by Gly-41 to Ser-48.

It belongs to the ABC transporter superfamily. Methionine importer (TC 3.A.1.24) family. The complex is composed of two ATP-binding proteins (MetN), two transmembrane proteins (MetI) and a solute-binding protein (MetQ).

The protein resides in the cell membrane. It catalyses the reaction L-methionine(out) + ATP + H2O = L-methionine(in) + ADP + phosphate + H(+). The catalysed reaction is D-methionine(out) + ATP + H2O = D-methionine(in) + ADP + phosphate + H(+). Functionally, part of the ABC transporter complex MetNIQ involved in methionine import. Responsible for energy coupling to the transport system. The sequence is that of Methionine import ATP-binding protein MetN from Lactococcus lactis subsp. cremoris (strain SK11).